Here is a 1050-residue protein sequence, read N- to C-terminus: RecBCD enzyme subunit RecB (1050 aa).

Residues 1 to 443 (MKPFNIFDSN…LQLVNNYRST (443 aa)) form the UvrD-like helicase ATP-binding domain. Residues 1 to 766 (MKPFNIFDSN…TNYVKLEGTQ (766 aa)) are DNA-binding and helicase activity, interacts with RecC. Position 21-28 (21-28 (ASAGTGKT)) interacts with ATP. The 244-residue stretch at 458–701 (SPFLEIPGYL…KITTIHSSKG (244 aa)) folds into the UvrD-like helicase C-terminal domain. The segment at 814 to 1050 (PKTIFSFSST…KAIQKCQAYH (237 aa)) is nuclease activity, interacts with RecD and RecA. Mg(2+) contacts are provided by His859, Asp945, and Asp958. Asp958 (for nuclease activity) is an active-site residue.

This sequence belongs to the helicase family. UvrD subfamily. As to quaternary structure, heterotrimer of RecB, RecC and RecD. All subunits contribute to DNA-binding. Interacts with RecA. Mg(2+) is required as a cofactor.

The enzyme catalyses Exonucleolytic cleavage (in the presence of ATP) in either 5'- to 3'- or 3'- to 5'-direction to yield 5'-phosphooligonucleotides.. It catalyses the reaction Couples ATP hydrolysis with the unwinding of duplex DNA by translocating in the 3'-5' direction.. The catalysed reaction is ATP + H2O = ADP + phosphate + H(+). A helicase/nuclease that prepares dsDNA breaks (DSB) for recombinational DNA repair. Binds to DSBs and unwinds DNA via a highly rapid and processive ATP-dependent bidirectional helicase activity. Unwinds dsDNA until it encounters a Chi (crossover hotspot instigator) sequence from the 3' direction. Cuts ssDNA a few nucleotides 3' to the Chi site. The properties and activities of the enzyme are changed at Chi. The Chi-altered holoenzyme produces a long 3'-ssDNA overhang and facilitates RecA-binding to the ssDNA for homologous DNA recombination and repair. Holoenzyme degrades any linearized DNA that is unable to undergo homologous recombination. In the holoenzyme this subunit contributes ATPase, 3'-5' helicase, exonuclease activity and loads RecA onto ssDNA. The chain is RecBCD enzyme subunit RecB from Chlamydia pneumoniae (Chlamydophila pneumoniae).